The chain runs to 834 residues: Protein argonaute (834 aa).

In terms of domain architecture, PAZ spans 210–326 (SLLQILMEYT…LPIEFCFVVK (117 aa)). The Piwi domain occupies 500-799 (YLFFILDKNS…VSNLARYQDV (300 aa)).

Belongs to the argonaute family. Ago subfamily. In terms of assembly, ago1, chp1 and tas3 interact to form the core of the RNA-induced transcriptional silencing (RITS) complex. The RITS complex interacts with the RDRC complex via interaction between ago1 and hrr1. Clr4 has a role in mediating this interaction. Component of the argonaute siRNA chaperone (ARC) complex composed of ago1, arb1 and arb2. Interacts with arb1.

Its subcellular location is the cytoplasm. The protein resides in the nucleus. The protein localises to the chromosome. It is found in the centromere. It localises to the telomere. Functionally, required for G1 arrest and mating in response to nitrogen starvation. Ago1 regulation of cytokinesis and cell cycle checkpoints occurs downstream of dcr1. Required, indirectly, for regulated hyperphosphorylation of cdc2. Has a role in the RNA interference (RNAi) pathway which is important for heterochromatin formation, accurate chromosome segregation, centromere cohesion and telomere function during mitosis and meiosis. Required for silencing at the centromeres and for initiation of transcriptionally silent heterochromatin at the mating type locus. Promotes histone H3K9 methylation necessary for centromere function. Required for recruitment of swi6 and cohesin to an ectopic dg repeat. A member of the RNA-induced transcriptional silencing (RITS) complex which is involved in the biosynthesis of dsRNA from primer siRNAs provided by the RNA-directed RNA polymerase (RDRC) complex. Has ribonuclease H-like cleavage (slicing) activity towards target messages complementary to siRNA and can direct site-specific cleavage of RNA substrates via siRNA. Slicing activity is required for both post-transcriptional and transcriptional gene silencing as well as for histone H3 'Lys-10' methylation spreading, conversion of double-stranded siRNA to single-stranded siRNA and siRNA-dependent association of ago1 with chromatin. A member of the argonaute siRNA chaperone (ARC) complex which is required for histone H3K9 methylation, heterochromatin assembly and siRNA generation. The ARC complex contains mostly double-stranded siRNA. The protein is Protein argonaute (ago1) of Schizosaccharomyces pombe (strain 972 / ATCC 24843) (Fission yeast).